A 637-amino-acid chain; its full sequence is Threonine--tRNA ligase (637 aa).

The TGS domain occupies 1–61 (MPVITLPDGS…DKDAELAIVT (61 aa)). A catalytic region spans residues 242 to 533 (DHRKIGKKLG…LIEHYEGAFP (292 aa)). Zn(2+)-binding residues include cysteine 333, histidine 384, and histidine 510.

Belongs to the class-II aminoacyl-tRNA synthetase family. In terms of assembly, homodimer. Zn(2+) serves as cofactor.

It localises to the cytoplasm. The catalysed reaction is tRNA(Thr) + L-threonine + ATP = L-threonyl-tRNA(Thr) + AMP + diphosphate + H(+). Functionally, catalyzes the attachment of threonine to tRNA(Thr) in a two-step reaction: L-threonine is first activated by ATP to form Thr-AMP and then transferred to the acceptor end of tRNA(Thr). Also edits incorrectly charged L-seryl-tRNA(Thr). This Hahella chejuensis (strain KCTC 2396) protein is Threonine--tRNA ligase.